The sequence spans 264 residues: Neurexophilin-2 (264 aa).

The first 22 residues, methionine 1–serine 22, serve as a signal peptide directing secretion. Residues glutamate 23–valine 90 form an II region. N-linked (GlcNAc...) asparagine glycosylation is found at asparagine 86, asparagine 139, asparagine 149, and asparagine 155. Residues glutamine 91–phenylalanine 169 are III. Residues glutamate 170–glutamate 178 are IV (linker domain). Positions threonine 179–glycine 264 are v (Cys-rich).

This sequence belongs to the neurexophilin family. Post-translationally, may be proteolytically processed at the boundary between the N-terminal non-conserved and the central conserved domain in neuron-like cells. In terms of tissue distribution, brain, only in a scattered subpopulation of neurons that probably represent inhibitory interneurons.

The protein resides in the secreted. May be signaling molecules that resemble neuropeptides and that act by binding to alpha-neurexins and possibly other receptors. This chain is Neurexophilin-2 (NXPH2), found in Bos taurus (Bovine).